The following is a 183-amino-acid chain: MITMKDIVREGHPSLTRSAAVVEVPLSKDDKQLLEDMMQFLKNSQDEEIAEKYELRAGVGIAAPQLGIEKQIIAIHFEDIDGKLYSMGLVNPKIISHSVEQSYLSSGEGCLSVDRPVEGYVPRHARITIKATDINDQPVKLRLKGYPAIVFQHEIDHINGIMFFDRINTEDPFNIPENSSPIQ.

Fe cation-binding residues include Cys-110 and His-153. The active site involves Glu-154. Fe cation is bound at residue His-157.

Belongs to the polypeptide deformylase family. Fe(2+) is required as a cofactor.

The catalysed reaction is N-terminal N-formyl-L-methionyl-[peptide] + H2O = N-terminal L-methionyl-[peptide] + formate. Functionally, removes the formyl group from the N-terminal Met of newly synthesized proteins. Requires at least a dipeptide for an efficient rate of reaction. N-terminal L-methionine is a prerequisite for activity but the enzyme has broad specificity at other positions. This chain is Peptide deformylase, found in Oceanobacillus iheyensis (strain DSM 14371 / CIP 107618 / JCM 11309 / KCTC 3954 / HTE831).